The chain runs to 88 residues: Small ribosomal subunit protein uS17 (88 aa).

Belongs to the universal ribosomal protein uS17 family. In terms of assembly, part of the 30S ribosomal subunit.

In terms of biological role, one of the primary rRNA binding proteins, it binds specifically to the 5'-end of 16S ribosomal RNA. This is Small ribosomal subunit protein uS17 from Oleidesulfovibrio alaskensis (strain ATCC BAA-1058 / DSM 17464 / G20) (Desulfovibrio alaskensis).